The chain runs to 292 residues: Shikimate dehydrogenase (NADP(+)) (292 aa).

Shikimate-binding positions include 25–27 (SKS) and Thr72. Residue Lys76 is the Proton acceptor of the active site. Residues Asn97 and Asp113 each contribute to the shikimate site. Residues 137-141 (GAGGA), 161-166 (NRTQSK), and Met230 each bind NADP(+). A shikimate-binding site is contributed by Tyr232. An NADP(+)-binding site is contributed by Gly254.

The protein belongs to the shikimate dehydrogenase family. As to quaternary structure, homodimer.

It catalyses the reaction shikimate + NADP(+) = 3-dehydroshikimate + NADPH + H(+). It participates in metabolic intermediate biosynthesis; chorismate biosynthesis; chorismate from D-erythrose 4-phosphate and phosphoenolpyruvate: step 4/7. Functionally, involved in the biosynthesis of the chorismate, which leads to the biosynthesis of aromatic amino acids. Catalyzes the reversible NADPH linked reduction of 3-dehydroshikimate (DHSA) to yield shikimate (SA). The protein is Shikimate dehydrogenase (NADP(+)) of Shewanella sp. (strain ANA-3).